A 295-amino-acid chain; its full sequence is ATP synthase gamma chain (295 aa).

It belongs to the ATPase gamma chain family. As to quaternary structure, F-type ATPases have 2 components, CF(1) - the catalytic core - and CF(0) - the membrane proton channel. CF(1) has five subunits: alpha(3), beta(3), gamma(1), delta(1), epsilon(1). CF(0) has three main subunits: a, b and c.

It localises to the cell membrane. In terms of biological role, produces ATP from ADP in the presence of a proton gradient across the membrane. The gamma chain is believed to be important in regulating ATPase activity and the flow of protons through the CF(0) complex. The sequence is that of ATP synthase gamma chain from Caldanaerobacter subterraneus subsp. tengcongensis (strain DSM 15242 / JCM 11007 / NBRC 100824 / MB4) (Thermoanaerobacter tengcongensis).